The sequence spans 319 residues: tRNA N6-adenosine threonylcarbamoyltransferase (319 aa).

Positions 110 and 114 each coordinate Fe cation. Residues 135–139 (VVSGG), aspartate 168, glycine 181, aspartate 185, and asparagine 277 each bind substrate. Aspartate 301 is a Fe cation binding site.

The protein belongs to the KAE1 / TsaD family. Requires Fe(2+) as cofactor.

The protein localises to the cytoplasm. It catalyses the reaction L-threonylcarbamoyladenylate + adenosine(37) in tRNA = N(6)-L-threonylcarbamoyladenosine(37) in tRNA + AMP + H(+). Required for the formation of a threonylcarbamoyl group on adenosine at position 37 (t(6)A37) in tRNAs that read codons beginning with adenine. Is involved in the transfer of the threonylcarbamoyl moiety of threonylcarbamoyl-AMP (TC-AMP) to the N6 group of A37, together with TsaE and TsaB. TsaD likely plays a direct catalytic role in this reaction. The polypeptide is tRNA N6-adenosine threonylcarbamoyltransferase (Mycoplasma pneumoniae (strain ATCC 29342 / M129 / Subtype 1) (Mycoplasmoides pneumoniae)).